We begin with the raw amino-acid sequence, 351 residues long: S-adenosylmethionine:tRNA ribosyltransferase-isomerase (351 aa).

Belongs to the QueA family. In terms of assembly, monomer.

The protein localises to the cytoplasm. The enzyme catalyses 7-aminomethyl-7-carbaguanosine(34) in tRNA + S-adenosyl-L-methionine = epoxyqueuosine(34) in tRNA + adenine + L-methionine + 2 H(+). It participates in tRNA modification; tRNA-queuosine biosynthesis. Its function is as follows. Transfers and isomerizes the ribose moiety from AdoMet to the 7-aminomethyl group of 7-deazaguanine (preQ1-tRNA) to give epoxyqueuosine (oQ-tRNA). This is S-adenosylmethionine:tRNA ribosyltransferase-isomerase from Fusobacterium nucleatum subsp. nucleatum (strain ATCC 25586 / DSM 15643 / BCRC 10681 / CIP 101130 / JCM 8532 / KCTC 2640 / LMG 13131 / VPI 4355).